Reading from the N-terminus, the 322-residue chain is uncharacterized protein (322 aa).

Residues 269–289 (QDEEEEPRDERRPRRRLGKAQ) are disordered.

This is an uncharacterized protein from Sinorhizobium fredii (strain NBRC 101917 / NGR234).